We begin with the raw amino-acid sequence, 449 residues long: 4-aminobutyrate aminotransferase (449 aa).

Lys-294 bears the N6-(pyridoxal phosphate)lysine mark.

Belongs to the class-III pyridoxal-phosphate-dependent aminotransferase family. Requires pyridoxal 5'-phosphate as cofactor.

It catalyses the reaction 4-aminobutanoate + 2-oxoglutarate = succinate semialdehyde + L-glutamate. The enzyme catalyses (S)-3-amino-2-methylpropanoate + 2-oxoglutarate = 2-methyl-3-oxopropanoate + L-glutamate. It functions in the pathway amino-acid degradation; 4-aminobutanoate degradation. This Mycobacterium bovis (strain ATCC BAA-935 / AF2122/97) protein is 4-aminobutyrate aminotransferase (gabT).